The following is a 932-amino-acid chain: Calpain-like protease palB/cpr-8 (932 aa).

A Calpain catalytic domain is found at 96–419 (KLHGNIFPPW…FDSLYVNWSP (324 aa)). Residues C178, H346, and N366 contribute to the active site. The interval 890–932 (QGHVTEGSDDDGGGGGGGGGGVHVEISSDGVVSIGEWEVADED) is disordered. Gly residues predominate over residues 902-911 (GGGGGGGGGV).

Belongs to the peptidase C2 family. PalB/RIM13 subfamily.

Functionally, required for the proteolytic cleavage of the transcription factor pacc-1 in response to alkaline ambient pH. The sequence is that of Calpain-like protease palB/cpr-8 (cpr-8) from Neurospora crassa (strain ATCC 24698 / 74-OR23-1A / CBS 708.71 / DSM 1257 / FGSC 987).